A 606-amino-acid polypeptide reads, in one-letter code: MAVAGPAPGAGARPRLDLQFLQRFLQILKVLFPSWSSQNALMFLTLLCLTLLEQFVIYQVGLIPSQYYGVLGNKDLEGFKTLTFLAVMLIVLNSTLKSFDQFTCNLLYVSWRKDLTEHLHRLYFRGRAYYTLNVLRDDIDNPDQRISQDVERFCRQLSSMASKLIISPFTLVYYTYQCFQSTGWLGPVSIFGYFILGTVVNKTLMGPIVMKLVHQEKLEGDFRFKHMQIRVNAEPAAFYRAGHVEHMRTDRRLQRLLQTQRELMSKELWLYIGINTFDYLGSILSYVVIAIPIFSGVYGDLSPAELSTLVSKNAFVCIYLISCFTQLIDLSTTLSDVAGYTHRIGQLRETLLDMSLKSQDCEILGESEWGLDTPPGWPAAEPADTAFLLERVSISAPSSDKPLIKDLSLKISEGQSLLITGNTGTGKTSLLRVLGGLWTSTRGSVQMLTDFGPHGVLFLPQKPFFTDGTLREQVIYPLKEVYPDSGSADDERILRFLELAGLSNLVARTEGLDQQVDWNWYDVLSPGEMQRLSFARLFYLQPKYAVLDEATSALTEEVESELYRIGQQLGMTFISVGHRQSLEKFHSLVLKLCGGGRWELMRIKVE.

The ABC transmembrane type-1 domain occupies 39-332 (NALMFLTLLC…CFTQLIDLST (294 aa)). Helical transmembrane passes span 43–63 (FLTL…VGLI), 76–96 (LEGF…NSTL), 190–210 (IFGY…PIVM), 279–299 (YLGS…GVYG), and 314–334 (AFVC…STTL). The 215-residue stretch at 389–603 (LERVSISAPS…GGGRWELMRI (215 aa)) folds into the ABC transporter domain. ATP is bound at residue 421–428 (GNTGTGKT).

It belongs to the ABC transporter superfamily. ABCD family. Peroxisomal fatty acyl CoA transporter (TC 3.A.1.203) subfamily. Homodimer or heterodimer. Interacts with LMBRD1; this interaction induces the translocation of ABCD4 from the ER to the lysosome membrane. Interacts with LMBRD1 and MMACHC; this interaction ensures the transport of cobalamin from the lysosome to the cytosol. As to expression, ubiquitous.

It is found in the endoplasmic reticulum membrane. The protein resides in the lysosome membrane. It catalyses the reaction an R-cob(III)alamin(out) + ATP + H2O = an R-cob(III)alamin(in) + ADP + phosphate + H(+). Its function is as follows. Lysosomal membrane protein that transports cobalamin (Vitamin B12) from the lysosomal lumen to the cytosol in an ATP-dependent manner. Targeted by LMBRD1 lysosomal chaperone from the endoplasmic reticulum to the lysosomal membrane. Then forms a complex with lysosomal chaperone LMBRD1 and cytosolic MMACHC to transport cobalamin across the lysosomal membrane. This is Lysosomal cobalamin transporter ABCD4 from Homo sapiens (Human).